We begin with the raw amino-acid sequence, 207 residues long: Putative 3-methyladenine DNA glycosylase (207 aa).

Belongs to the DNA glycosylase MPG family.

This Koribacter versatilis (strain Ellin345) protein is Putative 3-methyladenine DNA glycosylase.